Here is a 70-residue protein sequence, read N- to C-terminus: Large ribosomal subunit protein uL29 (70 aa).

The protein belongs to the universal ribosomal protein uL29 family.

This Thermosynechococcus vestitus (strain NIES-2133 / IAM M-273 / BP-1) protein is Large ribosomal subunit protein uL29.